The chain runs to 250 residues: NAD-dependent protein deacylase (250 aa).

The 250-residue stretch at M1–Q250 folds into the Deacetylase sirtuin-type domain. G20–W39 serves as a coordination point for NAD(+). Residues Y64 and R67 each contribute to the substrate site. Residue Q98–D101 coordinates NAD(+). The active-site Proton acceptor is the H116. The Zn(2+) site is built by C124, C127, C150, and C153. Residues G190–S192, N216–E218, and A234 contribute to the NAD(+) site.

This sequence belongs to the sirtuin family. Class III subfamily. The cofactor is Zn(2+).

The protein localises to the cytoplasm. It catalyses the reaction N(6)-acetyl-L-lysyl-[protein] + NAD(+) + H2O = 2''-O-acetyl-ADP-D-ribose + nicotinamide + L-lysyl-[protein]. The catalysed reaction is N(6)-succinyl-L-lysyl-[protein] + NAD(+) + H2O = 2''-O-succinyl-ADP-D-ribose + nicotinamide + L-lysyl-[protein]. Functionally, NAD-dependent lysine deacetylase and desuccinylase that specifically removes acetyl and succinyl groups on target proteins. Modulates the activities of several proteins which are inactive in their acylated form. Deacetylates the N-terminal lysine residue of Alba, the major archaeal chromatin protein and that, in turn, increases Alba's DNA binding affinity, thereby repressing transcription. This chain is NAD-dependent protein deacylase, found in Pyrococcus abyssi (strain GE5 / Orsay).